The following is a 233-amino-acid chain: Octanoyltransferase (233 aa).

The BPL/LPL catalytic domain maps to 34 to 212 (PDRPDVLLLL…AFAQTFELDL (179 aa)). Residues 76–83 (RGGEVTHH), 143–145 (AIG), and 156–158 (GFA) each bind substrate. Residue cysteine 174 is the Acyl-thioester intermediate of the active site.

This sequence belongs to the LipB family.

The protein localises to the cytoplasm. The catalysed reaction is octanoyl-[ACP] + L-lysyl-[protein] = N(6)-octanoyl-L-lysyl-[protein] + holo-[ACP] + H(+). The protein operates within protein modification; protein lipoylation via endogenous pathway; protein N(6)-(lipoyl)lysine from octanoyl-[acyl-carrier-protein]: step 1/2. Catalyzes the transfer of endogenously produced octanoic acid from octanoyl-acyl-carrier-protein onto the lipoyl domains of lipoate-dependent enzymes. Lipoyl-ACP can also act as a substrate although octanoyl-ACP is likely to be the physiological substrate. The sequence is that of Octanoyltransferase from Synechococcus elongatus (strain ATCC 33912 / PCC 7942 / FACHB-805) (Anacystis nidulans R2).